A 72-amino-acid polypeptide reads, in one-letter code: UPF0154 protein YneF (72 aa).

A helical transmembrane segment spans residues 4-24 (WVGILVGVVALLIGVALGFFI).

Belongs to the UPF0154 family.

The protein localises to the membrane. The sequence is that of UPF0154 protein YneF (yneF) from Bacillus subtilis (strain 168).